A 358-amino-acid polypeptide reads, in one-letter code: Putative zinc metalloprotease BH06270 (358 aa).

His-7 serves as a coordination point for Zn(2+). Glu-8 is a catalytic residue. Residue His-11 participates in Zn(2+) binding. 3 helical membrane passes run 89-111 (ATVF…FFFF), 282-304 (FLSL…LFPI), and 332-354 (IIFR…NDYF). The 76-residue stretch at 102–177 (TVVILTFFFF…IEFKMERSGQ (76 aa)) folds into the PDZ domain.

Belongs to the peptidase M50B family. Requires Zn(2+) as cofactor.

It localises to the cell inner membrane. The sequence is that of Putative zinc metalloprotease BH06270 from Bartonella henselae (strain ATCC 49882 / DSM 28221 / CCUG 30454 / Houston 1) (Rochalimaea henselae).